Here is a 360-residue protein sequence, read N- to C-terminus: Photosystem II protein D1 2 (360 aa).

3 helical membrane-spanning segments follow: residues 29–46 (YVGWFGVLMIPTLLTATT), 118–133 (HFLIGVFCYMGREWEL), and 142–156 (WICVAFSAPVAAATA). His-118 is a chlorophyll a binding site. Tyr-126 is a binding site for pheophytin a. Asp-170 and Glu-189 together coordinate [CaMn4O5] cluster. Residues 197 to 218 (FHMLGVAGVFGGSLFSAMHGSL) traverse the membrane as a helical segment. His-198 provides a ligand contact to chlorophyll a. A quinone is bound by residues His-215 and 264–265 (SF). Fe cation is bound at residue His-215. His-272 lines the Fe cation pocket. Residues 274-288 (FLGAWPVVGIWFTAL) form a helical membrane-spanning segment. [CaMn4O5] cluster-binding residues include His-332, Glu-333, Asp-342, and Ala-344. The propeptide occupies 345–360 (AGEQAPVALQAPAING).

It belongs to the reaction center PufL/M/PsbA/D family. PSII is composed of 1 copy each of membrane proteins PsbA, PsbB, PsbC, PsbD, PsbE, PsbF, PsbH, PsbI, PsbJ, PsbK, PsbL, PsbM, PsbT, PsbX, PsbY, PsbZ, Psb30/Ycf12, peripheral proteins PsbO, CyanoQ (PsbQ), PsbU, PsbV and a large number of cofactors. It forms dimeric complexes. It depends on The D1/D2 heterodimer binds P680, chlorophylls that are the primary electron donor of PSII, and subsequent electron acceptors. It shares a non-heme iron and each subunit binds pheophytin, quinone, additional chlorophylls, carotenoids and lipids. D1 provides most of the ligands for the Mn4-Ca-O5 cluster of the oxygen-evolving complex (OEC). There is also a Cl(-1) ion associated with D1 and D2, which is required for oxygen evolution. The PSII complex binds additional chlorophylls, carotenoids and specific lipids. as a cofactor. In terms of processing, tyr-161 forms a radical intermediate that is referred to as redox-active TyrZ, YZ or Y-Z. C-terminally processed by CtpA; processing is essential to allow assembly of the oxygen-evolving complex and thus photosynthetic growth.

The protein localises to the cellular thylakoid membrane. The catalysed reaction is 2 a plastoquinone + 4 hnu + 2 H2O = 2 a plastoquinol + O2. Photosystem II (PSII) is a light-driven water:plastoquinone oxidoreductase that uses light energy to abstract electrons from H(2)O, generating O(2) and a proton gradient subsequently used for ATP formation. It consists of a core antenna complex that captures photons, and an electron transfer chain that converts photonic excitation into a charge separation. The D1/D2 (PsbA/PsbD) reaction center heterodimer binds P680, the primary electron donor of PSII as well as several subsequent electron acceptors. This Picosynechococcus sp. (strain ATCC 27264 / PCC 7002 / PR-6) (Agmenellum quadruplicatum) protein is Photosystem II protein D1 2.